A 133-amino-acid chain; its full sequence is Fluoride-specific ion channel FluC (133 aa).

The next 4 membrane-spanning stretches (helical) occupy residues 12 to 32, 41 to 61, 76 to 96, and 104 to 124; these read LAMT…ASLI, WGTL…LVWL, IVGV…CLVF, and MIGI…FAGA. Positions 81 and 84 each coordinate Na(+).

Belongs to the fluoride channel Fluc/FEX (TC 1.A.43) family.

The protein localises to the cell inner membrane. It carries out the reaction fluoride(in) = fluoride(out). Na(+) is not transported, but it plays an essential structural role and its presence is essential for fluoride channel function. Its function is as follows. Fluoride-specific ion channel. Important for reducing fluoride concentration in the cell, thus reducing its toxicity. The sequence is that of Fluoride-specific ion channel FluC from Xanthomonas axonopodis pv. citri (strain 306).